The following is a 184-amino-acid chain: tRNA (cytidine(56)-2'-O)-methyltransferase (184 aa).

S-adenosyl-L-methionine-binding positions include Leu-87, 112–116, and 130–137; these read GAEKV and VANQPHSE.

This sequence belongs to the aTrm56 family. In terms of assembly, homodimer.

It is found in the cytoplasm. The catalysed reaction is cytidine(56) in tRNA + S-adenosyl-L-methionine = 2'-O-methylcytidine(56) in tRNA + S-adenosyl-L-homocysteine + H(+). Its function is as follows. Specifically catalyzes the AdoMet-dependent 2'-O-ribose methylation of cytidine at position 56 in tRNAs. This Methanocorpusculum labreanum (strain ATCC 43576 / DSM 4855 / Z) protein is tRNA (cytidine(56)-2'-O)-methyltransferase.